A 74-amino-acid polypeptide reads, in one-letter code: Cecropin-P3 (74 aa).

Residues 1-13 (MFLIYLLVQTAES) form the signal peptide. A propeptide spans 45–74 (RRRSVGEEDAIPSHIEVNKFFLRKPAKEHI) (removed in mature form).

Belongs to the cecropin family. In terms of tissue distribution, expressed in the body wall, intestine, uterus and ovary.

Its subcellular location is the secreted. Its function is as follows. Has antibacterial activity against several Gram-positive and Gram-negative bacteria. Is weakly active against yeasts. Acts by a nonpore mechanism. The polypeptide is Cecropin-P3 (ASCEC-3) (Ascaris suum (Pig roundworm)).